The primary structure comprises 194 residues: Large ribosomal subunit protein uL10 (194 aa).

Residues 172 to 187 (EGGAAEAPAEAATEAP) are compositionally biased toward low complexity. A disordered region spans residues 172 to 194 (EGGAAEAPAEAATEAPAEAEAES).

It belongs to the universal ribosomal protein uL10 family. In terms of assembly, part of the ribosomal stalk of the 50S ribosomal subunit. The N-terminus interacts with L11 and the large rRNA to form the base of the stalk. The C-terminus forms an elongated spine to which L12 dimers bind in a sequential fashion forming a multimeric L10(L12)X complex.

Functionally, forms part of the ribosomal stalk, playing a central role in the interaction of the ribosome with GTP-bound translation factors. The sequence is that of Large ribosomal subunit protein uL10 from Rhodococcus erythropolis (strain PR4 / NBRC 100887).